Reading from the N-terminus, the 475-residue chain is Tetratricopeptide repeat protein 29 (475 aa).

TPR repeat units lie at residues 92–131, 136–173, 182–215, 234–267, 274–307, 314–347, and 354–387; these read DALR…EDAE, FEDV…AQLI, AEAH…TQGR, LRTY…AKEG, GEAS…STEL, GRAY…ARNN, and VRAS…TVEL. Residues 436–475 form a disordered region; that stretch reads DIEPDPVTEEFRGSTVETVSQNSEHLEELSRFPGDQKNET. Over residues 459–475 the composition is skewed to basic and acidic residues; sequence EHLEELSRFPGDQKNET.

The protein resides in the cytoplasm. Its subcellular location is the cytoskeleton. It is found in the flagellum axoneme. Its function is as follows. Axonemal protein which is implicated in axonemal and/or peri-axonemal structure assembly and regulates flagellum assembly and beating and therefore sperm motility. The sequence is that of Tetratricopeptide repeat protein 29 (TTC29) from Macaca fascicularis (Crab-eating macaque).